The following is a 227-amino-acid chain: DNA repair protein RecO (227 aa).

It belongs to the RecO family.

Involved in DNA repair and RecF pathway recombination. The chain is DNA repair protein RecO from Pseudomonas putida (strain GB-1).